The following is a 356-amino-acid chain: Trans-enoyl reductase pgmF (356 aa).

Residues 57 to 60, 175 to 178, 198 to 201, Tyr216, 261 to 262, and 342 to 343 contribute to the NADP(+) site; these read VDFK, SGGC, STPN, VG, and AK.

This sequence belongs to the zinc-containing alcohol dehydrogenase family.

In terms of biological role, FAD-linked oxidoreductase; part of the gene cluster that mediates the biosynthesis of pleosporalin A, ascomycone A, as well as a third cryptic naphthoquinone derived pigment, all responsible for the coloration of conidia. The pathway begins with the biosynthesis of the cyclized heptaketide 3-acetonyl-1,6,8-trihydroxy-2-naphthaldehyde by the NR-PKS pgmA. The C-6 hydroxyl group is further methylated by the O-methyltransferase pgmB to yield fusarubinaldehyde which is in turn oxidized by the cytochrome P450 monooxygenase pgmC at C-9. The C-1 hydroxyl group is then methylated spontaneously. Although pgmE, pgmD and pgmH are essential for the production of pleosporalin A, it is not the case for the 2 other final products and it remains difficult to assign a specific function to each enzyme. PgmF and pgmG seem not to be involved in pigment biosynthesis although they were regulated by the cluster-specific transcription factor pgmR. This Aspergillus terreus protein is Trans-enoyl reductase pgmF.